The following is a 935-amino-acid chain: MVEASEGTLEPIGAVQRTLVGREATEPMRADIGLLGAILGDTVREQNGQQVFELVERARVESFRVRRSEIDRAELARMFAGIDIHQAIPVIRAFSHFALLANVAEDIHRERRRAIHVAAGEPPQDSSLAATYAKLDRAQLDSATVAEALRGAVVSPVITAHPTETRRRTVFVTQHRITELMRLHAEGHIETDDGRNIELELRRQVLTLWQTALIRLSRLQITDEIEVGLRYYAAAFFKVIPRVNAEVRNALRARWPGADLLDEPIVAPGSWIGGDRDGNPNVTADVVRRATGDAAYTALAHYLAELTACEQELSMSARLVAVTPELAALAEDCAEKARADEPYRRALRVIRGRLTATAAEILDRRPQHELDLGLPPYATPAELRGDLDTVDASLRAHGSALLADDRLALLREGVRVFGFHLCGLDMRQNSDVHEEVVAELLAWAGVHPDYRSLPEDERVELLAAELGTRRPLVGDRAELSELADKELGVVRAAAHAIRRYGPAAVPNYVISMCRSVSDVLEAAILLKEAGLIDASGPEPYCPVGISPLFETIEDLHNGAAILHAMLELPLYRALVAARGQSQEVMLGYSDSNKDGGYLASSWAVYRAELALVEVARKTGIRLRLFHGRGGTVGRGGGPSYEAILAQPPGAVNGSLRLTEQGEVIAAKYAEPQVAQRNLESLVAATLESTLLDVEGLGDTAEPAYAVLDEVAVLAQRAYAELVHETPGFVDYFMASTPVSEIGSLNIGSRPTSRKPTESIADLRAIPWVLAWSQSRVMLPGWYGTGSAFEQWIAAGPQSRAERVDILHDLYRRWPFFRSVLSNLAQVLAKSDLGLAAQYAELVDDAALRRRVFGKIADEHRRTIAMHKLITGQDNLLADNPALARSVFNRFPYLEPLNHLQVELLRRYRSGDDDELVQRGILLTMNGLTSALRNSG.

Catalysis depends on residues His161 and Lys593.

This sequence belongs to the PEPCase type 1 family. It depends on Mg(2+) as a cofactor.

The catalysed reaction is oxaloacetate + phosphate = phosphoenolpyruvate + hydrogencarbonate. Its function is as follows. Forms oxaloacetate, a four-carbon dicarboxylic acid source for the tricarboxylic acid cycle. The polypeptide is Phosphoenolpyruvate carboxylase (Mycobacterium avium (strain 104)).